A 375-amino-acid polypeptide reads, in one-letter code: Succinyl-diaminopimelate desuccinylase (375 aa).

Residue His-66 coordinates Zn(2+). Residue Asp-68 is part of the active site. Zn(2+) is bound at residue Asp-99. Glu-133 functions as the Proton acceptor in the catalytic mechanism. The Zn(2+) site is built by Glu-134, Glu-162, and His-348.

Belongs to the peptidase M20A family. DapE subfamily. In terms of assembly, homodimer. It depends on Zn(2+) as a cofactor. Co(2+) serves as cofactor.

The enzyme catalyses N-succinyl-(2S,6S)-2,6-diaminopimelate + H2O = (2S,6S)-2,6-diaminopimelate + succinate. The protein operates within amino-acid biosynthesis; L-lysine biosynthesis via DAP pathway; LL-2,6-diaminopimelate from (S)-tetrahydrodipicolinate (succinylase route): step 3/3. Catalyzes the hydrolysis of N-succinyl-L,L-diaminopimelic acid (SDAP), forming succinate and LL-2,6-diaminopimelate (DAP), an intermediate involved in the bacterial biosynthesis of lysine and meso-diaminopimelic acid, an essential component of bacterial cell walls. The polypeptide is Succinyl-diaminopimelate desuccinylase (Escherichia coli O139:H28 (strain E24377A / ETEC)).